Consider the following 658-residue polypeptide: Endoplasmic reticulum chaperone BiP (658 aa).

An N-terminal signal peptide occupies residues 1–19; the sequence is MVTMKLFALVLLVSASVFA. ATP-binding positions include 38–41, Lys98, 228–230, 294–301, and 365–368; these read GTTY, GGT, EKAKRALS, and GSTR. Residues 127 to 281 form a nucleotide-binding (NBD) region; it reads KPYIEVDIGD…KKKTGKDVRA (155 aa). Residues 410 to 420 form an interdomain linker region; sequence QDTGDLVLLDV. The segment at 421-501 is substrate-binding (SBD); it reads CPLTLGIETV…PRGVPQIEVT (81 aa). Residues 634-658 are disordered; it reads KLYGGAGAPPPEGAEGAEETEKDEL. A compositionally biased stretch (acidic residues) spans 648-658; it reads EGAEETEKDEL. Residues 655-658 carry the Prevents secretion from ER motif; the sequence is KDEL.

Belongs to the heat shock protein 70 family. In terms of assembly, monomer and homooligomer; homooligomerization via the interdomain linker inactivates the chaperone activity and acts as a storage of hspa5/BiP molecules. Interacts with DNAJC10. Interacts with dnajb9/ERdj4; leading to recruit hspa5/BiP to ern1/ire1. Interacts with ern1/ire1; interaction takes place following interaction with dnajb9/ERdj4 and leads to inactivate ern1/IRE1.

It is found in the endoplasmic reticulum lumen. The catalysed reaction is ATP + H2O = ADP + phosphate + H(+). Its activity is regulated as follows. The chaperone activity is regulated by ATP-induced allosteric coupling of the nucleotide-binding (NBD) and substrate-binding (SBD) domains. In the ADP-bound and nucleotide-free (apo) states, the two domains have little interaction. In contrast, in the ATP-bound state the two domains are tightly coupled, which results in drastically accelerated kinetics in both binding and release of polypeptide substrates. J domain-containing co-chaperones (dnajb9/ERdj4 or dnajc10/ERdj5) stimulate the ATPase activity and are required for efficient substrate recognition by hspa5/BiP. Homooligomerization inactivates participating hspa5/BiP protomers and probably act as reservoirs to store hspa5/BiP molecules when they are not needed by the cell. Endoplasmic reticulum chaperone that plays a key role in protein folding and quality control in the endoplasmic reticulum lumen. Involved in the correct folding of proteins and degradation of misfolded proteins via its interaction with dnajc10/ERdj5, probably to facilitate the release of dnajc10/ERdj5 from its substrate. Acts as a key repressor of the EIF2AK3/PERK and ERN1/IRE1-mediated unfolded protein response (UPR). In the unstressed endoplasmic reticulum, recruited by DNAJB9/ERdj4 to the luminal region of ERN1/IRE1, leading to disrupt the dimerization of ERN1/IRE1, thereby inactivating ERN1/IRE1. Also binds and inactivates EIF2AK3/PERK in unstressed cells. Accumulation of misfolded protein in the endoplasmic reticulum causes release of HSPA5/BiP from ERN1/IRE1 and EIF2AK3/PERK, allowing their homodimerization and subsequent activation. The sequence is that of Endoplasmic reticulum chaperone BiP from Xenopus laevis (African clawed frog).